The sequence spans 295 residues: MYTGRFAPSPTGLLHIGSLLTAAASYADARSNGGKWLVRMEDLDPPREMPGAANHILHTLEAFGFEWDGEVAYQSRRYALYEETLCRLQTAGLVYPCHCSRKDWQTGARRGADGFVYNGRCRNPQQRPAPQGKQPAWRIRVPDRVIGFSDGIVGGYAQNLAGDIGDFVLLRADGYWAYQLAVVADDAEQGVTHIVRGQDLLVSTPRQIYLQQCLDVPTPQYAHLPLLTNAQGQKWSKQTLAPALDLNRREQLLRQVFRYLNLPEAPEADRPAELLDWAVAHWDMDKVPKHAITTP.

L-glutamate contacts are provided by residues 5-9 (RFAPS) and glutamate 41. The 'HIGH' region signature appears at 8 to 18 (PSPTGLLHIGS). Residues cysteine 97, cysteine 99, tyrosine 117, and cysteine 121 each contribute to the Zn(2+) site. Residues tyrosine 178 and arginine 196 each coordinate L-glutamate. Residues 234 to 238 (KWSKQ) carry the 'KMSKS' region motif. ATP is bound at residue lysine 237.

It belongs to the class-I aminoacyl-tRNA synthetase family. GluQ subfamily. Zn(2+) serves as cofactor.

Functionally, catalyzes the tRNA-independent activation of glutamate in presence of ATP and the subsequent transfer of glutamate onto a tRNA(Asp). Glutamate is transferred on the 2-amino-5-(4,5-dihydroxy-2-cyclopenten-1-yl) moiety of the queuosine in the wobble position of the QUC anticodon. The sequence is that of Glutamyl-Q tRNA(Asp) synthetase from Neisseria meningitidis serogroup A / serotype 4A (strain DSM 15465 / Z2491).